Consider the following 394-residue polypeptide: 8-amino-7-oxononanoate synthase (394 aa).

Residue R21 coordinates substrate. 112–113 contacts pyridoxal 5'-phosphate; the sequence is GY. H137 lines the substrate pocket. 3 residues coordinate pyridoxal 5'-phosphate: S183, H211, and T239. At K242 the chain carries N6-(pyridoxal phosphate)lysine. T358 provides a ligand contact to substrate.

It belongs to the class-II pyridoxal-phosphate-dependent aminotransferase family. BioF subfamily. As to quaternary structure, homodimer. Pyridoxal 5'-phosphate serves as cofactor.

It catalyses the reaction 6-carboxyhexanoyl-[ACP] + L-alanine + H(+) = (8S)-8-amino-7-oxononanoate + holo-[ACP] + CO2. Its pathway is cofactor biosynthesis; biotin biosynthesis. Functionally, catalyzes the decarboxylative condensation of pimeloyl-[acyl-carrier protein] and L-alanine to produce 8-amino-7-oxononanoate (AON), [acyl-carrier protein], and carbon dioxide. In Paraburkholderia phymatum (strain DSM 17167 / CIP 108236 / LMG 21445 / STM815) (Burkholderia phymatum), this protein is 8-amino-7-oxononanoate synthase.